Here is a 338-residue protein sequence, read N- to C-terminus: Glutamate/glutamine/aspartate/asparagine-binding protein BztA (338 aa).

A signal peptide spans 1-22; it reads MKKSAFFGSVALAALVAGAASA.

This sequence belongs to the bacterial solute-binding protein 3 family.

The protein resides in the periplasm. In terms of biological role, part of a binding-protein-dependent transport system for glutamate, glutamine, aspartate and asparagine. The chain is Glutamate/glutamine/aspartate/asparagine-binding protein BztA (bztA) from Rhodobacter capsulatus (strain ATCC BAA-309 / NBRC 16581 / SB1003).